The sequence spans 462 residues: Ubiquitin carboxyl-terminal hydrolase calypso (462 aa).

In terms of domain architecture, UCH catalytic spans 29 to 260 (GWLELESDPG…IRFNLMAVVP (232 aa)). Cysteine 115 functions as the Nucleophile in the catalytic mechanism. Histidine 197 serves as the catalytic Proton donor. The region spanning 357–385 (NYDKFICTFLSMLAHQGVLGELVSQHLLP) is the ULD domain. The positively charged C-terminal tail required for binding nucleosomes stretch occupies residues 387 to 462 (KKIANRLNRQ…KGRNKCRKRK (76 aa)). Residues 413–447 (GTNAAGSKSQQQQQQTQQQPQQTQTAKNGKSPGKT) are compositionally biased toward low complexity. Residues 413-462 (GTNAAGSKSQQQQQQTQQQPQQTQTAKNGKSPGKTPGRRRKGRNKCRKRK) form a disordered region. Over residues 448 to 462 (PGRRRKGRNKCRKRK) the composition is skewed to basic residues.

It belongs to the peptidase C12 family. BAP1 subfamily. As to quaternary structure, catalytic component of the polycomb repressive deubiquitinase (PR-DUB) complex, at least composed of caly/calypso, Asx and sba (MBD5/6 homolog). The PR-DUB complex associates with nucleosomes to mediate deubiquitination of histone H2AK118ub1 substrates; the association requires the positively charged C-terminal tail of caly, probably due to direct binding of DNA. Interacts (via ULD domain) with Asx (via DEUBAD domain); the interaction produces a stable heterodimer with a composite binding site for ubiquitin. Homodimerizes (via coiled-coil hinge-region between the UCH and ULD domains) to mediate assembly of 2 copies of the caly-Asx heterodimer into a bisymmetric tetramer; dimerization enhances PR-DUB association with nucleosomes.

The protein resides in the nucleus. The enzyme catalyses Thiol-dependent hydrolysis of ester, thioester, amide, peptide and isopeptide bonds formed by the C-terminal Gly of ubiquitin (a 76-residue protein attached to proteins as an intracellular targeting signal).. Functionally, catalytic component of the polycomb repressive deubiquitinase (PR-DUB) complex, a complex that specifically mediates deubiquitination of histone H2A monoubiquitinated at 'Lys-119' (H2AK118ub1). Mediates bisymmetric organization of the PR-DUB complex and is involved in association with nucleosomes to mediate deubiquitination. Does not deubiquitinate monoubiquitinated histone H2B. Required to maintain the transcriptionally repressive state of homeotic genes throughout development. The PR-DUB complex has weak or no activity toward 'Lys-48'- and 'Lys-63'-linked polyubiquitin chains. Polycomb group (PcG) protein. The protein is Ubiquitin carboxyl-terminal hydrolase calypso of Drosophila grimshawi (Hawaiian fruit fly).